Reading from the N-terminus, the 394-residue chain is Flap endonuclease 1 (394 aa).

The interval 1–104 (MGIKQLFSII…GELAKRFQRK (104 aa)) is N-domain. Residue D34 coordinates Mg(2+). R47 and R70 together coordinate DNA. Residues D86, E158, E160, D179, and D181 each coordinate Mg(2+). Positions 122–253 (DVEKFSRRTV…STALKLIREH (132 aa)) are I-domain. E158 contacts DNA. The DNA site is built by G231 and D233. Residue D233 participates in Mg(2+) binding. The tract at residues 341–349 (QQARIEGFF) is interaction with PCNA. The segment covering 356 to 383 (EEEKKAHKRKLEEQAEQKRKKVKEEKKE) has biased composition (basic and acidic residues). Residues 356–394 (EEEKKAHKRKLEEQAEQKRKKVKEEKKEKAKLKAKPRGA) are disordered. Residues 384 to 394 (KAKLKAKPRGA) show a composition bias toward basic residues.

Belongs to the XPG/RAD2 endonuclease family. FEN1 subfamily. As to quaternary structure, interacts with PCNA. Three molecules of FEN1 bind to one PCNA trimer with each molecule binding to one PCNA monomer. PCNA stimulates the nuclease activity without altering cleavage specificity. Requires Mg(2+) as cofactor. In terms of processing, phosphorylated. Phosphorylation upon DNA damage induces relocalization to the nuclear plasma.

The protein resides in the nucleus. It is found in the nucleolus. Its subcellular location is the nucleoplasm. The protein localises to the mitochondrion. Functionally, structure-specific nuclease with 5'-flap endonuclease and 5'-3' exonuclease activities involved in DNA replication and repair. During DNA replication, cleaves the 5'-overhanging flap structure that is generated by displacement synthesis when DNA polymerase encounters the 5'-end of a downstream Okazaki fragment. It enters the flap from the 5'-end and then tracks to cleave the flap base, leaving a nick for ligation. Also involved in the long patch base excision repair (LP-BER) pathway, by cleaving within the apurinic/apyrimidinic (AP) site-terminated flap. Acts as a genome stabilization factor that prevents flaps from equilibrating into structures that lead to duplications and deletions. Also possesses 5'-3' exonuclease activity on nicked or gapped double-stranded DNA, and exhibits RNase H activity. Also involved in replication and repair of rDNA and in repairing mitochondrial DNA. This chain is Flap endonuclease 1, found in Sordaria macrospora (strain ATCC MYA-333 / DSM 997 / K(L3346) / K-hell).